The sequence spans 1405 residues: Tonsoku-like protein (1405 aa).

TPR repeat units lie at residues 23-56 (AVSC…YASM), 63-96 (AKAK…AKRL), 163-196 (ARCY…SKTH), 203-237 (HLCY…AKRF), 245-278 (CETL…NTPD), 314-347 (KGLY…AELN), and 355-388 (VPIY…NQDA). The LRR 1 repeat unit spans residues 153–181 (ISKLEQLDMQARCYLNIGVVKEHMEAFQE). The stretch at 439-465 (MVRLRRLMLKHNMQVLVENLEADATAK) is one LRR 2 repeat. The tract at residues 465–535 (KGIDLDQEES…RGNRTLVIKK (71 aa)) is disordered. A compositionally biased stretch (acidic residues) spans 469–483 (LDQEESVGDDEEESD). ANK repeat units follow at residues 538 to 567 (KGET…TVNV), 571 to 600 (AGWL…ASAI), and 609 to 638 (DGIT…DATV). Disordered regions lie at residues 695 to 753 (FNAK…KEYR), 806 to 827 (KRIN…DTAL), and 841 to 880 (TPEN…KKHQ). Ser707 and Ser709 each carry phosphoserine. Positions 813–822 (LSRRTSKENF) are enriched in basic and acidic residues. A compositionally biased stretch (polar residues) spans 841–850 (TPENEYSQRQ). Over residues 859–874 (SRSSSMSSNHSSSATS) the composition is skewed to low complexity. Phosphoserine occurs at positions 893, 895, 899, and 902. LRR repeat units lie at residues 1085–1108 (QARL…QLAK), 1113–1137 (LLQL…LLCG), 1143–1166 (LELL…ILSK), 1186–1211 (LTEL…QLTQ), 1287–1311 (AKQL…YILD), and 1333–1357 (LQKL…VFSM).

It belongs to the Tonsoku family.

It is found in the nucleus. It localises to the nucleoplasm. Its subcellular location is the chromosome. Its function is as follows. Histone reader involved in homologous recombination-mediated repair of double-strand breaks (DSBs) at stalled or collapsed replication forks. Specifically recognizes and binds histone H3.1. The polypeptide is Tonsoku-like protein (Drosophila melanogaster (Fruit fly)).